The sequence spans 371 residues: ETS-related transcription factor Elf-3 (371 aa).

The 87-residue stretch at 46–132 (NPQMSLEGTE…AQLRDLTSSS (87 aa)) folds into the PNT domain. The short motif at 137-145 (SWIIELLEK) is the 9aaTAD element. Residues 173–251 (GQQASPYHPG…HGKRKRGRPR (79 aa)) form a disordered region. The span at 181-216 (PGSCGAGAPSPGSSDVSTAGTGASRSSHSSDSGGSD) shows a compositional bias: low complexity. Positions 231 to 241 (GFRDCKKGDPK) are enriched in basic and acidic residues. Residues 242 to 251 (HGKRKRGRPR) are compositionally biased toward basic residues. Residues 273–355 (THLWEFIRDI…DGRRLVYKFG (83 aa)) constitute a DNA-binding region (ETS).

The protein belongs to the ETS family. Interacts with TBP. Interacts with CREBBP and EP300; these act as transcriptional coactivators of ELF3 and positively modulate its function. Interacts with XRCC5/KU86 and XRCC6/KU70; these inhibit the ability of ELF3 to bind DNA and negatively modulate its transcriptional activity. Associated with CLND7 and POU2F3. Interacts with ZNF768. Expressed exclusively in tissues containing a high content of terminally differentiated epithelial cells including mammary gland, colon, trachea, kidney, prostate, uterus, stomach and skin.

Its subcellular location is the cytoplasm. The protein localises to the nucleus. In terms of biological role, transcriptional activator that binds and transactivates ETS sequences containing the consensus nucleotide core sequence GGA[AT]. Acts synergistically with POU2F3 to transactivate the SPRR2A promoter and with RUNX1 to transactivate the ANGPT1 promoter. Also transactivates collagenase, CCL20, CLND7, FLG, KRT8, NOS2, PTGS2, SPRR2B, TGFBR2 and TGM3 promoters. Represses KRT4 promoter activity. Involved in mediating vascular inflammation. May play an important role in epithelial cell differentiation and tumorigenesis. May be a critical downstream effector of the ERBB2 signaling pathway. May be associated with mammary gland development and involution. Plays an important role in the regulation of transcription with TATA-less promoters in preimplantation embryos, which is essential in preimplantation development. This is ETS-related transcription factor Elf-3 from Homo sapiens (Human).